Reading from the N-terminus, the 154-residue chain is Deoxyuridine 5'-triphosphate nucleotidohydrolase (154 aa).

Substrate contacts are provided by residues 64 to 66 (RSG), Asn77, 81 to 83 (TID), and Lys91.

The protein belongs to the dUTPase family. As to quaternary structure, homotrimer. The cofactor is Mg(2+).

The enzyme catalyses dUTP + H2O = dUMP + diphosphate + H(+). Its pathway is pyrimidine metabolism; dUMP biosynthesis; dUMP from dCTP (dUTP route): step 2/2. Its function is as follows. This enzyme is involved in nucleotide metabolism: it produces dUMP, the immediate precursor of thymidine nucleotides and it decreases the intracellular concentration of dUTP so that uracil cannot be incorporated into DNA. This Mycobacterium sp. (strain JLS) protein is Deoxyuridine 5'-triphosphate nucleotidohydrolase.